The sequence spans 410 residues: Elongation factor Tu, chloroplastic (410 aa).

A tr-type G domain is found at 10–215; it reads KPHVNIGTIG…NVDSYIPTPE (206 aa). The interval 19-26 is G1; that stretch reads GHVDHGKT. 19–26 is a GTP binding site; it reads GHVDHGKT. Threonine 26 contacts Mg(2+). Positions 61-65 are G2; sequence GITIN. A G3 region spans residues 82–85; sequence DCPG. Residues 82-86 and 137-140 contribute to the GTP site; these read DCPGH and NKKD. A G4 region spans residues 137 to 140; sequence NKKD. Residues 175-177 are G5; sequence SAL.

Belongs to the TRAFAC class translation factor GTPase superfamily. Classic translation factor GTPase family. EF-Tu/EF-1A subfamily.

It is found in the plastid. It localises to the chloroplast. It catalyses the reaction GTP + H2O = GDP + phosphate + H(+). In terms of biological role, GTP hydrolase that promotes the GTP-dependent binding of aminoacyl-tRNA to the A-site of ribosomes during protein biosynthesis. The chain is Elongation factor Tu, chloroplastic (tufA) from Oltmannsiellopsis viridis (Marine flagellate).